A 938-amino-acid chain; its full sequence is Isoleucine--tRNA ligase (938 aa).

Positions 58–68 (PYANGSIHIGH) match the 'HIGH' region motif. Lys-183 is modified (N6-acetyllysine). Glu-561 is a binding site for L-isoleucyl-5'-AMP. A 'KMSKS' region motif is present at residues 602–606 (KMSKS). ATP is bound at residue Lys-605. 4 residues coordinate Zn(2+): Cys-901, Cys-904, Cys-921, and Cys-924.

This sequence belongs to the class-I aminoacyl-tRNA synthetase family. IleS type 1 subfamily. As to quaternary structure, monomer. Requires Zn(2+) as cofactor.

It localises to the cytoplasm. It carries out the reaction tRNA(Ile) + L-isoleucine + ATP = L-isoleucyl-tRNA(Ile) + AMP + diphosphate. In terms of biological role, catalyzes the attachment of isoleucine to tRNA(Ile). As IleRS can inadvertently accommodate and process structurally similar amino acids such as valine, to avoid such errors it has two additional distinct tRNA(Ile)-dependent editing activities. One activity is designated as 'pretransfer' editing and involves the hydrolysis of activated Val-AMP. The other activity is designated 'posttransfer' editing and involves deacylation of mischarged Val-tRNA(Ile). This is Isoleucine--tRNA ligase from Escherichia coli (strain 55989 / EAEC).